We begin with the raw amino-acid sequence, 131 residues long: Ribonuclease VapC13 (131 aa).

A PINc domain is found at 2–128; sequence ILVDSNIPMY…RGFDSYPGIK (127 aa). Mg(2+) is bound by residues aspartate 5 and aspartate 99.

The protein belongs to the PINc/VapC protein family. Mg(2+) serves as cofactor.

It localises to the secreted. Toxic component of a type II toxin-antitoxin (TA) system. An RNase. The cognate antitoxin is VapB13. This Mycobacterium tuberculosis (strain ATCC 25618 / H37Rv) protein is Ribonuclease VapC13.